The following is a 331-amino-acid chain: MWLWEEQGGLMGPFSFLLLVLLLLTRSPFNACLFTGSLYLLLRLFSFEPVPSRRAMQVLKPRDRVSAIAHRGGSHDAPENTLAAIRQAAKNGAAGVELDLEFTADGIPVLMHDSTVDRTTDGTGRLCDLTFEQIRKLNPAANHRLRNDFPNEKIPTLREAVAECLNHNLTIFFDVKGHAYKATDALKKVYMEFPKLYNNSIVCSFLPEVIYKMRQTDQNVVTALIHRPWSLSHTGDGKPRFESFWKQSMFVALDILLDWSMHNILWYLCGVSAFLAQKDFISPDYVKKWSAKGIQVVAWTVNTFDEKSYYESHLGSSYITDSMLEDCTPEF.

The Cytoplasmic segment spans residues 1–2 (MW). A helical transmembrane segment spans residues 3–23 (LWEEQGGLMGPFSFLLLVLLL). At 24-254 (LTRSPFNACL…WKQSMFVALD (231 aa)) the chain is on the lumenal side. Residues 65 to 331 (VSAIAHRGGS…SMLEDCTPEF (267 aa)) enclose the GP-PDE domain. Mg(2+) is bound by residues Glu97 and Asp99. The N-linked (GlcNAc...) asparagine glycan is linked to Asn168. Asp174 contributes to the Mg(2+) binding site. N-linked (GlcNAc...) asparagine glycosylation is present at Asn198. Residues 255 to 275 (ILLDWSMHNILWYLCGVSAFL) traverse the membrane as a helical segment. Over 276-331 (AQKDFISPDYVKKWSAKGIQVVAWTVNTFDEKSYYESHLGSSYITDSMLEDCTPEF) the chain is Cytoplasmic.

The protein belongs to the glycerophosphoryl diester phosphodiesterase family. As to quaternary structure, interacts with PRAF2. Interacts with RGS16. Mg(2+) is required as a cofactor. Post-translationally, N-glycosylated.

The protein resides in the cell membrane. It localises to the cytoplasmic vesicle membrane. The enzyme catalyses sn-glycero-3-phospho-1D-myo-inositol + H2O = myo-inositol + sn-glycerol 3-phosphate + H(+). It catalyses the reaction 1-O-(1Z-octadecenyl)-sn-glycero-3-phospho-(N-5Z,8Z,11Z,14Z-eicosatetraenoyl)-ethanolamine + H2O = 1-O-(1Z-octadecenyl)-sn-glycero-3-phosphate + N-(5Z,8Z,11Z,14Z-eicosatetraenoyl)-ethanolamine + H(+). The catalysed reaction is 1-O-(1Z-octadecenyl)-sn-glycero-3-phospho-(N-9Z-octadecenoyl)-ethanolamine + H2O = 1-O-(1Z-octadecenyl)-sn-glycero-3-phosphate + N-(9Z-octadecenoyl) ethanolamine + H(+). It carries out the reaction 1-O-(1Z-octadecenyl)-sn-glycero-3-phospho-N-hexadecanoyl-ethanolamine + H2O = 1-O-(1Z-octadecenyl)-sn-glycero-3-phosphate + N-hexadecanoylethanolamine + H(+). The enzyme catalyses N-(4Z,7Z,10Z,13Z,16Z,19Z)-docosahexaenoyl-sn-glycero-3-phosphoethanolamine + H2O = N-(4Z,7Z,10Z,13Z,16Z,19Z)-docosahexaenoyl ethanolamine + sn-glycerol 3-phosphate + H(+). It catalyses the reaction N-eicosanoyl-sn-glycero-3-phosphoethanolamine + H2O = N-eicosanoyl ethanolamine + sn-glycerol 3-phosphate + H(+). The catalysed reaction is N-hexadecanoyl-sn-glycero-3-phosphoethanolamine + H2O = N-hexadecanoylethanolamine + sn-glycerol 3-phosphate + H(+). It carries out the reaction N-(9Z-octadecenoyl)-sn-glycero-3-phosphoethanolamine + H2O = N-(9Z-octadecenoyl) ethanolamine + sn-glycerol 3-phosphate + H(+). The enzyme catalyses N-(5Z,8Z,11Z,14Z-eicosatetraenoyl)-sn-glycero-3-phosphoethanolamine + H2O = N-(5Z,8Z,11Z,14Z-eicosatetraenoyl)-ethanolamine + sn-glycerol 3-phosphate + H(+). With respect to regulation, inhibited by EDTA, calcium chloride, and zinc chloride. Enhanced by magnesium chloride. Glycerophosphodiester phosphodiesterase activity can be modulated by G-protein signaling pathways. Hydrolyzes the phosphodiester bond of glycerophosphodiesters such as glycerophosphoinositol (GroPIns) and glycerophosphoethanolamine (GroPEth), to yield a glycerol phosphate and an alcohol. Hydrolyzes glycerophospho-N-acylethanolamines to N-acylethanolamines in the brain and participates in bioactive N-acylethanolamine biosynthesis such as anandamide (an endocannabinoid), N-palmitoylethanolamine (an anti-inflammatory), and N-oleoylethanolamine (an anorexic). In addition, has a lysophospholipase D activity by hydrolyzing N-acyl-lysoplasmenylethanolamine (N-acyl-lysoPlsEt) to N-acylethanolamine. However lysophospholipase D activity is lower than glycerophosphodiester phosphodiesterase activity. Has little or no activity towards glycerophosphocholine. The sequence is that of Glycerophosphodiester phosphodiesterase 1 from Bos taurus (Bovine).